A 24-amino-acid chain; its full sequence is Conotoxin PIVE (24 aa).

3 disulfides stabilise this stretch: C2–C10, C3–C15, and C13–C19. A Lysine amide modification is found at K24.

This sequence belongs to the conotoxin A superfamily. As to expression, expressed by the venom duct.

The protein localises to the secreted. Probable neurotoxin with ion channel inhibitor activity. In vivo, elicits dose-dependently excitatory activity upon injection into fish. Its action is slowly reversible. This is Conotoxin PIVE from Conus purpurascens (Purple cone).